A 780-amino-acid polypeptide reads, in one-letter code: Mediator of RNA polymerase II transcription subunit 15 (780 aa).

Residues 1–124 are interaction with nhr-49; that stretch reads MSEEDWPSPK…PQPTSAQARN (124 aa). The tract at residues 2 to 96 is interaction with sbp-1; sequence SEEDWPSPKF…SPPCTTAALL (95 aa). 3 disordered regions span residues 91–152, 166–363, and 564–597; these read TTAA…APSA, PSPD…QGMM, and GPGP…GTPN. Residues 125-139 show a composition bias toward low complexity; sequence PPVTVATTQASTTPS. The span at 225-245 shows a compositional bias: gly residues; the sequence is PPNGYGGYGMMNGPPGSGAPM. Over residues 296–316 the composition is skewed to polar residues; the sequence is QGATPTGPSSVLESLINQPQQ. Composition is skewed to low complexity over residues 333-353 and 574-594; these read AAQR…QQQR and SMSG…NPMG.

This sequence belongs to the Mediator complex subunit 15 family. As to quaternary structure, component of the Mediator complex. Interacts with nhr-49, nhr-64 and sbp-1. Expressed in the intestine and head neurons.

The protein localises to the nucleus. Component of the Mediator complex, a coactivator involved in regulated gene transcription of nearly all RNA polymerase II-dependent genes. Mediator functions as a bridge to convey information from gene-specific regulatory proteins to the basal RNA polymerase II transcription machinery. Mediator is recruited to promoters by direct interactions with regulatory proteins and serves as a scaffold for the assembly of a functional preinitiation complex with RNA polymerase II and the general transcription factors. Required for regulated expression of genes controlling fatty acid desaturation by transcription factors including sbp-1 and nhr-49. Involved in the response to simulated microgravity, in concert with sbp-1, probably acting in the intestine. This Caenorhabditis elegans protein is Mediator of RNA polymerase II transcription subunit 15 (mdt-15).